A 100-amino-acid polypeptide reads, in one-letter code: Urease subunit gamma (100 aa).

Belongs to the urease gamma subunit family. Heterotrimer of UreA (gamma), UreB (beta) and UreC (alpha) subunits. Three heterotrimers associate to form the active enzyme.

Its subcellular location is the cytoplasm. It carries out the reaction urea + 2 H2O + H(+) = hydrogencarbonate + 2 NH4(+). Its pathway is nitrogen metabolism; urea degradation; CO(2) and NH(3) from urea (urease route): step 1/1. This Escherichia coli protein is Urease subunit gamma.